The primary structure comprises 33 residues: Protamine-1A (33 aa).

A disordered region spans residues 1–33 (PRRRRSSSRPVRRRRRPRRVSRRRRRRGGRRRR).

In terms of tissue distribution, testis.

It localises to the nucleus. It is found in the chromosome. In terms of biological role, protamines substitute for histones in the chromatin of sperm during the haploid phase of spermatogenesis. They compact sperm DNA into a highly condensed, stable and inactive complex. This Oncorhynchus mykiss (Rainbow trout) protein is Protamine-1A.